Reading from the N-terminus, the 764-residue chain is Thyrotropin receptor (764 aa).

The first 20 residues, 1–20 (MRPADLLQLVLLLDLPRDLG), serve as a signal peptide directing secretion. Residues 21–413 (GMGCSSPPCE…EFNPCEDIMG (393 aa)) are Extracellular-facing. Cysteines 31 and 41 form a disulfide. N-linked (GlcNAc...) asparagine glycosylation is found at asparagine 77, asparagine 99, and asparagine 113. 7 LRR repeats span residues 100-124 (LSKV…ALKE), 125-150 (LPLL…VYST), 152-174 (IFFI…AFQG), 176-199 (CNET…AFNG), 200-223 (TKLD…AFGG), 227-248 (GPSL…GLEH), and 250-271 (KELI…SFLH). Asparagine 177 and asparagine 198 each carry an N-linked (GlcNAc...) asparagine glycan. Residue asparagine 302 is glycosylated (N-linked (GlcNAc...) asparagine). Position 385 is a sulfotyrosine (tyrosine 385). The chain crosses the membrane as a helical span at residues 414–441 (YKFLRIVVWFVSLLALLGNVFVLLILLT). Topologically, residues 442-450 (SHYKLNVPR) are cytoplasmic. A helical transmembrane segment spans residues 451–473 (FLMCNLAFADFCMGMYLLLIASV). The Extracellular segment spans residues 474-494 (DLYTHSEYYNHAIDWQTGPGC). A disulfide bond links cysteine 494 and cysteine 569. A helical membrane pass occupies residues 495–517 (NTAGFFTVFASELSVYTLTVITL). Residues 518–537 (ERWYAITFAMRLDRKIRLRH) lie on the Cytoplasmic side of the membrane. A helical membrane pass occupies residues 538–560 (ACAIMVGGWVCCFLLALLPLVGI). The Extracellular portion of the chain corresponds to 561–580 (SSYAKVSICLPMDTETPLAL). Residues 581–602 (AYIVFVLTLNIVAFVIVCCCYV) traverse the membrane as a helical segment. The Cytoplasmic portion of the chain corresponds to 603-625 (KIYITVRNPQYNPGDKDTKIAKR). A helical transmembrane segment spans residues 626-649 (MAVLIFTDFICMAPISFYALSAIL). Topologically, residues 650-660 (NKPLITVSNSK) are extracellular. A helical membrane pass occupies residues 661 to 682 (ILLVLFYPLNSCANPFLYAIFT). Residues 683-764 (KAFQRDVFIL…ISEEYMQTVL (82 aa)) are Cytoplasmic-facing. The short motif at 762 to 764 (TVL) is the PDZ-binding element.

This sequence belongs to the G-protein coupled receptor 1 family. FSH/LSH/TSH subfamily. Interacts with heterodimer GPHA2:GPHB5; this interaction stimulates cAMP production. Interacts (via the PDZ-binding motif) with SCRIB; regulates TSHR trafficking and function. Glycosylated. Post-translationally, sulfated. Sulfation on Tyr-385 plays a role in thyrotropin receptor binding and activation. Expressed in thyroide cells (at protein level). Expressed in the thyroid.

The protein resides in the cell membrane. It is found in the basolateral cell membrane. Receptor for the thyroid-stimulating hormone (TSH) or thyrotropin. Also acts as a receptor for the heterodimeric glycoprotein hormone (GPHA2:GPHB5) or thyrostimulin. The activity of this receptor is mediated by G proteins which activate adenylate cyclase. Plays a central role in controlling thyroid cell metabolism. The sequence is that of Thyrotropin receptor (TSHR) from Homo sapiens (Human).